The sequence spans 87 residues: Transcriptional regulator PINT87aa (87 aa).

In terms of assembly, interacts with PAF1 complex member PAF1. Interacts with transcription factor FOXM1. As to expression, expressed in brain, liver, kidney and stomach with lower levels in breast, intestine, thyroid and pancreas.

It localises to the nucleus. In terms of biological role, enhances the binding of the PAF1 complex to target gene promoters and plays a role in negative regulation of transcription. May function as an anchor to keep the PAF1 complex on target gene promoters, sequentially pausing RNA polymerase II-induced mRNA elongation. Inhibits FOXM1-mediated transcription of PHB2. In Homo sapiens (Human), this protein is Transcriptional regulator PINT87aa.